A 420-amino-acid chain; its full sequence is Glutamyl-tRNA reductase (420 aa).

Substrate-binding positions include 49 to 52, Ser-109, 114 to 116, and Gln-120; these read TCNR and EPQ. Catalysis depends on Cys-50, which acts as the Nucleophile. 189–194 provides a ligand contact to NADP(+); it reads GAGETI.

Belongs to the glutamyl-tRNA reductase family. As to quaternary structure, homodimer.

The enzyme catalyses (S)-4-amino-5-oxopentanoate + tRNA(Glu) + NADP(+) = L-glutamyl-tRNA(Glu) + NADPH + H(+). It participates in porphyrin-containing compound metabolism; protoporphyrin-IX biosynthesis; 5-aminolevulinate from L-glutamyl-tRNA(Glu): step 1/2. Functionally, catalyzes the NADPH-dependent reduction of glutamyl-tRNA(Glu) to glutamate 1-semialdehyde (GSA). In Photorhabdus laumondii subsp. laumondii (strain DSM 15139 / CIP 105565 / TT01) (Photorhabdus luminescens subsp. laumondii), this protein is Glutamyl-tRNA reductase.